The following is a 469-amino-acid chain: 24-hydroxycholesterol 7-alpha-hydroxylase (469 aa).

The signal sequence occupies residues 1 to 23; the sequence is MELISPTVIIILGCLALFLLLQR. A run of 3 helical transmembrane segments spans residues 267 to 287, 352 to 372, and 412 to 432; these read GLLL…WTLA, VEIL…PFWL, and FQCP…ILIL. Position 414 (cysteine 414) interacts with heme.

It belongs to the cytochrome P450 family. Requires heme as cofactor. Liver specific.

The protein localises to the endoplasmic reticulum membrane. Its subcellular location is the microsome membrane. The enzyme catalyses (24S)-hydroxycholesterol + reduced [NADPH--hemoprotein reductase] + O2 = (24S)-7alpha-dihydroxycholesterol + oxidized [NADPH--hemoprotein reductase] + H2O + H(+). Its pathway is steroid metabolism; cholesterol degradation. The protein operates within lipid metabolism; bile acid biosynthesis. In terms of biological role, a cytochrome P450 monooxygenase involved in neural cholesterol clearance through bile acid synthesis. Catalyzes 7-alpha hydroxylation of (24S)-hydroxycholesterol, a neural oxysterol that is metabolized to bile acids in the liver. Mechanistically, uses molecular oxygen inserting one oxygen atom into a substrate, and reducing the second into a water molecule, with two electrons provided by NADPH via cytochrome P450 reductase (CPR; NADPH-ferrihemoprotein reductase). The chain is 24-hydroxycholesterol 7-alpha-hydroxylase from Homo sapiens (Human).